Consider the following 590-residue polypeptide: Aspartate--tRNA(Asp/Asn) ligase (590 aa).

E172 is a binding site for L-aspartate. Positions 196–199 (QLFK) are aspartate. Position 218 (R218) interacts with L-aspartate. ATP contacts are provided by residues 218 to 220 (RDE) and Q227. H449 serves as a coordination point for L-aspartate. Residue E484 coordinates ATP. L-aspartate is bound at residue R491. ATP is bound at residue 536 to 539 (GVDR).

Belongs to the class-II aminoacyl-tRNA synthetase family. Type 1 subfamily. As to quaternary structure, homodimer.

The protein localises to the cytoplasm. It carries out the reaction tRNA(Asx) + L-aspartate + ATP = L-aspartyl-tRNA(Asx) + AMP + diphosphate. Aspartyl-tRNA synthetase with relaxed tRNA specificity since it is able to aspartylate not only its cognate tRNA(Asp) but also tRNA(Asn). Reaction proceeds in two steps: L-aspartate is first activated by ATP to form Asp-AMP and then transferred to the acceptor end of tRNA(Asp/Asn). The protein is Aspartate--tRNA(Asp/Asn) ligase of Francisella tularensis subsp. tularensis (strain WY96-3418).